The chain runs to 216 residues: Large ribosomal subunit protein uL3 (216 aa).

Disordered regions lie at residues 89-108 and 139-158; these read QRASDEEMPETGGSIDVGGF and NTHGNSKSHRVPGSIGQCQS. Position 157 is an N5-methylglutamine (glutamine 157).

Belongs to the universal ribosomal protein uL3 family. As to quaternary structure, part of the 50S ribosomal subunit. Forms a cluster with proteins L14 and L19. Methylated by PrmB.

In terms of biological role, one of the primary rRNA binding proteins, it binds directly near the 3'-end of the 23S rRNA, where it nucleates assembly of the 50S subunit. The protein is Large ribosomal subunit protein uL3 of Halorhodospira halophila (strain DSM 244 / SL1) (Ectothiorhodospira halophila (strain DSM 244 / SL1)).